The following is a 449-amino-acid chain: Delta(8)-fatty-acid desaturase 1 (449 aa).

Residues 7-91 form the Cytochrome b5 heme-binding domain; that stretch reads KKYITNEDLK…IRDFQVSEVS (85 aa). Residues His-42 and His-65 each contribute to the heme site. 2 helical membrane passes run 113–133 and 138–158; these read VTLYTLAFVAAMFLGVLYGVL and VFAHQIAAALLGLLWIQSAYI. Positions 160–164 match the Histidine box-1 motif; the sequence is HDSGH. Residues 173–195 form a helical membrane-spanning segment; the sequence is YNRFAQLLSGNCLTGISIAWWKW. Positions 197 to 201 match the Histidine box-2 motif; that stretch reads HNAHH. The next 3 membrane-spanning stretches (helical) occupy residues 255 to 275, 284 to 304, and 311 to 331; these read YYPVMCFGRINLFIQTFLLLF, ALNFAGILVFWTWFPLLVSCL, and FFFVFTSFTVTALQHIQFTLN. The short motif at 374–378 is the Histidine box-3 element; that stretch reads QLEHH.

It belongs to the fatty acid desaturase type 1 family. The cofactor is Fe cation. Highly expressed in flowers. Expressed in roots, leaves, stems and siliques.

The protein localises to the endoplasmic reticulum membrane. The enzyme catalyses an N-acyl-(4R)-4-hydroxysphinganine + 2 Fe(II)-[cytochrome b5] + O2 + 2 H(+) = a (4R,8E)-4-hydroxysphingenine ceramide + 2 Fe(III)-[cytochrome b5] + 2 H2O. It catalyses the reaction an N-acyl-(4R)-4-hydroxysphinganine + 2 Fe(II)-[cytochrome b5] + O2 + 2 H(+) = a (4R,8Z)-4-hydroxysphing-8-enine ceramide + 2 Fe(III)-[cytochrome b5] + 2 H2O. Functionally, plays a major role as delta(8)-fatty-acid desaturase which introduces a double bond at the 8-position in the long-chain base (LCB) of ceramides with or without a hydroxy group at the 4-position. The enzyme produces both the 8E and 8Z isomers (in a 4:1 ratio). This structural modification contributes to the quantitative partitioning of ceramides between the two major sphingolipid classes, glucosylceramides and glycosylinositolphosphoryl ceramides. Sphingolipids are important membrane components involved in environmental stress responses, such as resistance to chilling, and act as cell signaling molecules. In Arabidopsis thaliana (Mouse-ear cress), this protein is Delta(8)-fatty-acid desaturase 1 (SLD1).